Here is a 1017-residue protein sequence, read N- to C-terminus: Probable calcium-transporting ATPase 8, plasma membrane-type (1017 aa).

The Cytoplasmic portion of the chain corresponds to 1–153 (MEKLDRYLQE…FVWDAFQDMT (153 aa)). The next 2 helical transmembrane spans lie at 154–174 (LIILMVCALLSVAVGLATEGW) and 177–197 (GMYDGLGIILSIFLVVMVTAV). Residues 198-228 (SDYKQSLQFKELDNEKKKIFIHVTRDGRRQK) are Cytoplasmic-facing. The next 2 membrane-spanning stretches (helical) occupy residues 229-249 (ISIYDLVVGDIVHLSIGDQVP) and 331-351 (VATVIGKIGLVFAILTFLVLL). Residues 352 to 384 (VRFLIDKGMTVGLLKWYSTDALTIVNYFATAVT) lie on the Cytoplasmic side of the membrane. The helical transmembrane segment at 385-405 (IIVVAVPEGLPLAVTLSLAFA) threads the bilayer. The active-site 4-aspartylphosphate intermediate is the Asp-434. Positions 736 and 740 each coordinate Mg(2+). The chain crosses the membrane as a helical span at residues 803–823 (IVALVINFVSACITGSAPLTA). At 824-825 (VQ) the chain is on the cytoplasmic side. The next 2 helical transmembrane spans lie at 826-846 (LLWVNMIMDTLGALALATEPP) and 875-895 (SLYQLFVLGALMFGGESLLNI). Over 896 to 938 (KGADSKSIINTLIFNSFVFCQVFNEINSREMQKINVFRGIISN) the chain is Cytoplasmic. The next 2 membrane-spanning stretches (helical) occupy residues 939–959 (WIFIAVIAATVAFQVVIIEFL) and 973–993 (WLLSVGLGSISLIVGVILKCI). The Cytoplasmic segment spans residues 994–1017 (PVGSGETSATPNGYRPLANGPDDI).

The protein belongs to the cation transport ATPase (P-type) (TC 3.A.3) family. Type IIB subfamily.

It is found in the membrane. The catalysed reaction is Ca(2+)(in) + ATP + H2O = Ca(2+)(out) + ADP + phosphate + H(+). With respect to regulation, activated by calmodulin. Functionally, this magnesium-dependent enzyme catalyzes the hydrolysis of ATP coupled with the translocation of calcium from the cytosol out of the cell, into the endoplasmic reticulum, or into organelles. This Oryza sativa subsp. japonica (Rice) protein is Probable calcium-transporting ATPase 8, plasma membrane-type.